The primary structure comprises 111 residues: Gastrula zinc finger protein XlCGF32.1 (111 aa).

4 consecutive C2H2-type zinc fingers follow at residues 6–28, 34–56, 62–84, and 89–111; these read FDCT…FLCH, FVCV…LRIH, SVCP…MRIH, and FMCS…LQIH.

This sequence belongs to the krueppel C2H2-type zinc-finger protein family.

The protein resides in the nucleus. May be involved in transcriptional regulation. This is Gastrula zinc finger protein XlCGF32.1 from Xenopus laevis (African clawed frog).